Consider the following 168-residue polypeptide: Phosphopantetheine adenylyltransferase (168 aa).

Residue threonine 13 coordinates substrate. ATP contacts are provided by residues 13 to 14 (TF) and histidine 21. Residues lysine 45, leucine 78, and arginine 92 each contribute to the substrate site. ATP is bound by residues 93 to 95 (GLR), glutamate 103, and 128 to 134 (TQFISSS).

The protein belongs to the bacterial CoaD family. In terms of assembly, homohexamer. The cofactor is Mg(2+).

The protein resides in the cytoplasm. The enzyme catalyses (R)-4'-phosphopantetheine + ATP + H(+) = 3'-dephospho-CoA + diphosphate. Its pathway is cofactor biosynthesis; coenzyme A biosynthesis; CoA from (R)-pantothenate: step 4/5. Functionally, reversibly transfers an adenylyl group from ATP to 4'-phosphopantetheine, yielding dephospho-CoA (dPCoA) and pyrophosphate. This is Phosphopantetheine adenylyltransferase from Wolbachia pipientis wMel.